Consider the following 95-residue polypeptide: Putative septation protein SpoVG (95 aa).

This sequence belongs to the SpoVG family.

In terms of biological role, could be involved in septation. The polypeptide is Putative septation protein SpoVG (Clostridium acetobutylicum (strain ATCC 824 / DSM 792 / JCM 1419 / IAM 19013 / LMG 5710 / NBRC 13948 / NRRL B-527 / VKM B-1787 / 2291 / W)).